The primary structure comprises 381 residues: PqqA peptide cyclase (381 aa).

The 217-residue stretch at 12–228 folds into the Radical SAM core domain; sequence VGPPLWLLAE…AEYRQRLAAE (217 aa). [4Fe-4S] cluster is bound by residues Cys-26, Cys-30, and Cys-33.

It belongs to the radical SAM superfamily. PqqE family. As to quaternary structure, interacts with PqqD. The interaction is necessary for activity of PqqE. Requires [4Fe-4S] cluster as cofactor.

It carries out the reaction [PQQ precursor protein] + S-adenosyl-L-methionine = E-Y cross-linked-[PQQ precursor protein] + 5'-deoxyadenosine + L-methionine + H(+). It participates in cofactor biosynthesis; pyrroloquinoline quinone biosynthesis. Catalyzes the cross-linking of a glutamate residue and a tyrosine residue in the PqqA protein as part of the biosynthesis of pyrroloquinoline quinone (PQQ). In Pseudomonas aeruginosa (strain LESB58), this protein is PqqA peptide cyclase.